The following is a 218-amino-acid chain: Octanoyltransferase (218 aa).

In terms of domain architecture, BPL/LPL catalytic spans 31–206 (REAGDEVWLV…QLVKHLDYAE (176 aa)). Residues 70 to 77 (RGGQVTYH), 137 to 139 (SLG), and 150 to 152 (GLA) each bind substrate. The Acyl-thioester intermediate role is filled by Cys168.

This sequence belongs to the LipB family.

Its subcellular location is the cytoplasm. It carries out the reaction octanoyl-[ACP] + L-lysyl-[protein] = N(6)-octanoyl-L-lysyl-[protein] + holo-[ACP] + H(+). The protein operates within protein modification; protein lipoylation via endogenous pathway; protein N(6)-(lipoyl)lysine from octanoyl-[acyl-carrier-protein]: step 1/2. Functionally, catalyzes the transfer of endogenously produced octanoic acid from octanoyl-acyl-carrier-protein onto the lipoyl domains of lipoate-dependent enzymes. Lipoyl-ACP can also act as a substrate although octanoyl-ACP is likely to be the physiological substrate. The sequence is that of Octanoyltransferase from Pseudomonas syringae pv. tomato (strain ATCC BAA-871 / DC3000).